The sequence spans 689 residues: MIKRKIWCNLCIDLVAFTSEIFKGAVFQSLDGIVVSANCKLRKIFTLKSKPQDTADKDAVCGVPFSTDEPTDIIPRSCQLMTDVPHVTQLLNMTKLRQTEIKFGGHPLRSAESDQFINRGTGSTRNSKNQDVCHIAFGSKVLGPPPLSGRRSNMRISSETVRSVGSKNNRSCQPSTVEKHVNGTEMSALLIPESEEQGNKENIHHIKQTVPIHAANLPIMHPHPPQEPSADKNNNRRRLRLKSTSRERTETPSGNSSGNNTNEVKAATVLTTVSQQEAGLLNSSTLGPQSPDQSDEWIFPENADHVSYLASSRQSLLLDDDSCHPSHLWLEASKESEHDQQAEESQSVPKDIFTFSSRPRSAPHGKTQTMSPEEVSFILDLKEDNSVTSRDTQSEDDFYGGDSSEEGDHSIQGSRGPTTGPSELTQLTSESLLGEAAKRTSKEYLKSAYTEAGATESQDSSAEQIDRNNFQMSSLPTTCFSPTGRRCGSCQKTPDPVIKAKDLPAQQVPASLNKTSLKEISGERLSSIPEASEYDWRNYQPSQMSESELQMLASLRRQQNEELEDAGTSHGLSASQVDNCNVSISTSSDDTTTWNSCLPPPVNQGHHYQKEMNPPSPSNPRDWLNMLSPPIVPPSQQPAEQRPDSSESLSVQGEEDLSVEEDEEVLTLLYDPCLDCYFDPQTGKYYELV.

Disordered stretches follow at residues 143 to 179 (GPPP…TVEK), 217 to 236 (LPIM…NNNR), 241 to 262 (LKST…NNTN), 333 to 424 (SKES…PSEL), and 583 to 660 (SIST…LSVE). Positions 150-176 (RRSNMRISSETVRSVGSKNNRSCQPST) are enriched in polar residues. Polar residues predominate over residues 343–359 (EESQSVPKDIFTFSSRP). Residues 394-405 (SEDDFYGGDSSE) are compositionally biased toward acidic residues. Polar residues predominate over residues 411-421 (IQGSRGPTTGP). The span at 583 to 593 (SISTSSDDTTT) shows a compositional bias: low complexity.

In Macaca fascicularis (Crab-eating macaque), this protein is Protein CFAP20DC (CFAP20DC).